We begin with the raw amino-acid sequence, 494 residues long: Cytochrome P450 2A3 (494 aa).

Ser-131 carries the phosphoserine modification. Lys-379 carries the N6-acetyllysine modification. Residue Cys-439 participates in heme binding.

It belongs to the cytochrome P450 family. It depends on heme as a cofactor. In terms of tissue distribution, lung.

The protein resides in the endoplasmic reticulum membrane. It is found in the microsome membrane. The catalysed reaction is an organic molecule + reduced [NADPH--hemoprotein reductase] + O2 = an alcohol + oxidized [NADPH--hemoprotein reductase] + H2O + H(+). Cytochromes P450 are a group of heme-thiolate monooxygenases. In liver microsomes, this enzyme is involved in an NADPH-dependent electron transport pathway. It oxidizes a variety of structurally unrelated compounds, including steroids, fatty acids, and xenobiotics. The polypeptide is Cytochrome P450 2A3 (Cyp2a3) (Rattus norvegicus (Rat)).